A 323-amino-acid polypeptide reads, in one-letter code: Calcium homeostasis modulator protein 2 (323 aa).

Residues 1–21 (MAALIAENFRFLSLFFKSKDV) lie on the Cytoplasmic side of the membrane. Positions 14–39 (LFFKSKDVMIFNGLVALGTVGSQELF) are central pore. The chain crosses the membrane as a helical span at residues 22 to 43 (MIFNGLVALGTVGSQELFSVVA). Residues 44 to 52 (FHCPCSPAR) are Extracellular-facing. Cystine bridges form between Cys-46/Cys-130 and Cys-48/Cys-162. Residues 53 to 76 (NYLYGLAAIGVPALVLFIIGIILN) traverse the membrane as a helical segment. At 77 to 101 (NHTWNLVAECQHRRTKNCSAAPTFL) the chain is on the cytoplasmic side. A helical membrane pass occupies residues 102–132 (LLSSILGRAAVAPVTWSVISLLRGEAYVCAL). Residues 133–179 (SEFVDPSSLTAREEHFPSAHATEILARFPCKENPDNLSDFREEVSRR) are Extracellular-facing. The hemichannel docking stretch occupies residues 145–152 (EEHFPSAH). A helical membrane pass occupies residues 180–206 (LRYESQLFGWLLIGVVAILVFLTKCLK). At 207–323 (HYCSPLSYRQ…DNVEMALLPS (117 aa)) the chain is on the cytoplasmic side. Residues 214-251 (YRQEAYWAQYRANEDQLFQRTAEVHSRVLAANNVRRFF) are intersubunit interaction.

It belongs to the CALHM family. In terms of assembly, homo-undecamer. Two undecameric hemichannels can assemble in a head-to-head manner to form a gap junction. As to expression, placenta.

It localises to the cell membrane. It catalyses the reaction ATP(in) = ATP(out). Its activity is regulated as follows. Inhibited by Ca(2+) and ruthenium red in a voltage-dependent way. In terms of biological role, pore-forming subunit of Ca(2+) homeostasis modulator channels. Mediates ATP release from astrocytes and ATP-induced Ca(2+) influx in microglia thus regulating neuronal ATP and Ca(2+) homeostasis, synaptic transmission and neuroinflammatory response. May form intercellular gap junctions. The gating mechanism remains unknown. This Homo sapiens (Human) protein is Calcium homeostasis modulator protein 2.